A 327-amino-acid polypeptide reads, in one-letter code: Cell surface glycoprotein CD200 receptor 1 (327 aa).

The signal sequence occupies residues 1–23; that stretch reads MLCFWRTSHVAVLLIWGVFAAES. The Extracellular segment spans residues 24–239; the sequence is SCPDKNQTMQ…GRGGDQLLGS (216 aa). Residues 26-145 form the Ig-like V-type domain; that stretch reads PDKNQTMQNN…GNFQNIYDLQ (120 aa). N-linked (GlcNAc...) asparagine glycans are attached at residues asparagine 29, asparagine 34, asparagine 43, asparagine 96, asparagine 159, asparagine 187, asparagine 192, and asparagine 222. 2 disulfide bridges follow: cysteine 58/cysteine 129 and cysteine 81/cysteine 97. The Ig-like C2-type domain maps to 147–226; it reads LVPPEVTHFP…HLTTGNQSLS (80 aa). 2 disulfide bridges follow: cysteine 164/cysteine 213 and cysteine 183/cysteine 201. The helical transmembrane segment at 240–260 threads the bilayer; that stretch reads YIQYIIPSIIILIIIGCICLL. Over 261–327 the chain is Cytoplasmic; that stretch reads KISGCRKCKL…DCLTLSAMGI (67 aa).

It belongs to the CD200R family. CD200 and CD200R1 interact via their respective N-terminal Ig-like domains. In terms of processing, phosphorylated on tyrosine residues. Highly N-glycosylated. As to expression, restricted to cells of the myeloid lineage.

Its subcellular location is the cell membrane. Its function is as follows. Inhibitory receptor for the CD200/OX2 cell surface glycoprotein. Limits inflammation by inhibiting the expression of pro-inflammatory molecules including TNF-alpha, interferons, and inducible nitric oxide synthase (iNOS) in response to selected stimuli. The protein is Cell surface glycoprotein CD200 receptor 1 (Cd200r1) of Rattus norvegicus (Rat).